Here is a 600-residue protein sequence, read N- to C-terminus: Elongation factor 4 (600 aa).

In terms of domain architecture, tr-type G spans 7–189; it reads SLIRNFSIIA…ALVQRLPAPT (183 aa). GTP-binding positions include 19 to 24 and 136 to 139; these read DHGKST and NKID.

The protein belongs to the TRAFAC class translation factor GTPase superfamily. Classic translation factor GTPase family. LepA subfamily.

It is found in the cell inner membrane. It catalyses the reaction GTP + H2O = GDP + phosphate + H(+). Functionally, required for accurate and efficient protein synthesis under certain stress conditions. May act as a fidelity factor of the translation reaction, by catalyzing a one-codon backward translocation of tRNAs on improperly translocated ribosomes. Back-translocation proceeds from a post-translocation (POST) complex to a pre-translocation (PRE) complex, thus giving elongation factor G a second chance to translocate the tRNAs correctly. Binds to ribosomes in a GTP-dependent manner. The chain is Elongation factor 4 from Gluconobacter oxydans (strain 621H) (Gluconobacter suboxydans).